A 353-amino-acid polypeptide reads, in one-letter code: D-glycerol 3-phosphate phosphatase (353 aa).

Residue D14 is the Nucleophile of the active site. Residues D14, D16, and D209 each coordinate Mg(2+). The Proton donor role is filled by D16.

Belongs to the HAD-like hydrolase superfamily. In terms of assembly, homodimer. Requires Mg(2+) as cofactor. The cofactor is Co(2+). It depends on Mn(2+) as a cofactor.

It catalyses the reaction sn-glycerol 1-phosphate + H2O = glycerol + phosphate. It functions in the pathway glycerolipid metabolism. Dephosphorylates D-glycerol 3-phosphate (sn-glycerol 1-phosphate). Is the final enzyme involved in the recycling/catabolism of glycerophospholipid polar heads. To a lesser extent, is also able to act on glycerol 2-phosphate and D-ribulose 5-phosphate, but cannot use D-glyceraldehyde 3-phosphate, dihydroxyacetone-phosphate, UMP or GMP as substrates. This is D-glycerol 3-phosphate phosphatase from Mycobacterium tuberculosis (strain ATCC 25618 / H37Rv).